Reading from the N-terminus, the 124-residue chain is Mediator of RNA polymerase II transcription subunit 31 (124 aa).

It belongs to the Mediator complex subunit 31 family. As to quaternary structure, component of the Mediator complex.

The protein resides in the nucleus. Component of the Mediator complex, a coactivator involved in the regulated transcription of nearly all RNA polymerase II-dependent genes. Mediator functions as a bridge to convey information from gene-specific regulatory proteins to the basal RNA polymerase II transcription machinery. Mediator is recruited to promoters by direct interactions with regulatory proteins and serves as a scaffold for the assembly of a functional preinitiation complex with RNA polymerase II and the general transcription factors. In Kluyveromyces lactis (strain ATCC 8585 / CBS 2359 / DSM 70799 / NBRC 1267 / NRRL Y-1140 / WM37) (Yeast), this protein is Mediator of RNA polymerase II transcription subunit 31 (SOH1).